The chain runs to 162 residues: MDNLNINFINDDEHPIPSQDLLLKCLQLVADKHHISHAEVNLNIVSNDEIQQINKQFRNKDKPTNIISFEFEKPQGLPDDIANDFLGDIVIAPAVLENEAKEQNKELNDHWQHIFIHGLLHLLGYDHQGDQEAEVMENLEIQLLAQLGIANPYIEQEDQNGR.

Residues His-117, His-121, and His-127 each contribute to the Zn(2+) site.

It belongs to the endoribonuclease YbeY family. The cofactor is Zn(2+).

It localises to the cytoplasm. In terms of biological role, single strand-specific metallo-endoribonuclease involved in late-stage 70S ribosome quality control and in maturation of the 3' terminus of the 16S rRNA. This is Endoribonuclease YbeY from Francisella tularensis subsp. mediasiatica (strain FSC147).